We begin with the raw amino-acid sequence, 508 residues long: Photosystem II CP47 reaction center protein (508 aa).

Transmembrane regions (helical) follow at residues 21–36, 101–115, 140–156, 203–218, 237–252, and 457–472; these read AVHI…WAGS, IVFS…IWHW, GIHL…FGAF, IAAG…FHLS, VLSS…AFIV, and TFAL…HGAR.

The protein belongs to the PsbB/PsbC family. PsbB subfamily. PSII is composed of 1 copy each of membrane proteins PsbA, PsbB, PsbC, PsbD, PsbE, PsbF, PsbH, PsbI, PsbJ, PsbK, PsbL, PsbM, PsbT, PsbX, PsbY, PsbZ, Psb30/Ycf12, at least 3 peripheral proteins of the oxygen-evolving complex and a large number of cofactors. It forms dimeric complexes. Binds multiple chlorophylls. PSII binds additional chlorophylls, carotenoids and specific lipids. is required as a cofactor.

The protein localises to the plastid. The protein resides in the chloroplast thylakoid membrane. One of the components of the core complex of photosystem II (PSII). It binds chlorophyll and helps catalyze the primary light-induced photochemical processes of PSII. PSII is a light-driven water:plastoquinone oxidoreductase, using light energy to abstract electrons from H(2)O, generating O(2) and a proton gradient subsequently used for ATP formation. In Cryptomeria japonica (Japanese cedar), this protein is Photosystem II CP47 reaction center protein.